Reading from the N-terminus, the 428-residue chain is Elongation factor 1-alpha (428 aa).

The 221-residue stretch at 5–225 (KPVLNVAFIG…DKFQPPEKPT (221 aa)) folds into the tr-type G domain. Residues 14–21 (GHVDAGKS) form a G1 region. 14–21 (GHVDAGKS) contacts GTP. Ser-21 serves as a coordination point for Mg(2+). A G2 region spans residues 70 to 74 (GVTID). The segment at 91–94 (DCPG) is G3. GTP-binding positions include 91–95 (DCPGH) and 149–152 (NKMD). A G4 region spans residues 149–152 (NKMD). Residues 189–191 (ASL) form a G5 region.

The protein belongs to the TRAFAC class translation factor GTPase superfamily. Classic translation factor GTPase family. EF-Tu/EF-1A subfamily.

It is found in the cytoplasm. It carries out the reaction GTP + H2O = GDP + phosphate + H(+). Its function is as follows. GTP hydrolase that promotes the GTP-dependent binding of aminoacyl-tRNA to the A-site of ribosomes during protein biosynthesis. In Methanocaldococcus jannaschii (strain ATCC 43067 / DSM 2661 / JAL-1 / JCM 10045 / NBRC 100440) (Methanococcus jannaschii), this protein is Elongation factor 1-alpha.